We begin with the raw amino-acid sequence, 563 residues long: Alpha-keto-acid decarboxylase (563 aa).

A thiamine diphosphate-binding site is contributed by E59. Residues 348–367 are disordered; it reads SPPVASPPAEPLPPPPPREQ. The span at 351 to 366 shows a compositional bias: pro residues; it reads VASPPAEPLPPPPPRE. The interval 394–476 is thiamine pyrophosphate binding; sequence TSFYGMADHR…VVVNNDGYTV (83 aa). The Mg(2+) site is built by D444, N471, and G473.

This sequence belongs to the TPP enzyme family. It depends on a metal cation as a cofactor. Thiamine diphosphate is required as a cofactor.

In terms of biological role, decarboxylates branched-chain and aromatic alpha-keto acids to aldehydes. This chain is Alpha-keto-acid decarboxylase (kdc), found in Mycobacterium avium (strain 104).